The primary structure comprises 93 residues: Beta-defensin 128 (93 aa).

The first 18 residues, 1-18 (MKLFLVLIILLFEVLTDG), serve as a signal peptide directing secretion. 3 disulfide bridges follow: cysteine 24–cysteine 52, cysteine 32–cysteine 46, and cysteine 36–cysteine 53.

The protein belongs to the beta-defensin family.

The protein localises to the secreted. In terms of biological role, has antibacterial activity. In Pongo pygmaeus (Bornean orangutan), this protein is Beta-defensin 128 (DEFB128).